A 158-amino-acid polypeptide reads, in one-letter code: Endoribonuclease YbeY (158 aa).

Zn(2+) contacts are provided by His119, His123, and Asp129.

It belongs to the endoribonuclease YbeY family. It depends on Zn(2+) as a cofactor.

It is found in the cytoplasm. Single strand-specific metallo-endoribonuclease involved in late-stage 70S ribosome quality control and in maturation of the 3' terminus of the 16S rRNA. The polypeptide is Endoribonuclease YbeY (Chlamydia pneumoniae (Chlamydophila pneumoniae)).